Reading from the N-terminus, the 141-residue chain is Putative pre-16S rRNA nuclease (141 aa).

It belongs to the YqgF nuclease family.

The protein resides in the cytoplasm. Its function is as follows. Could be a nuclease involved in processing of the 5'-end of pre-16S rRNA. This is Putative pre-16S rRNA nuclease from Cupriavidus necator (strain ATCC 17699 / DSM 428 / KCTC 22496 / NCIMB 10442 / H16 / Stanier 337) (Ralstonia eutropha).